The sequence spans 284 residues: 2-dehydro-3-deoxyphosphooctonate aldolase (284 aa).

The protein belongs to the KdsA family.

The protein resides in the cytoplasm. It carries out the reaction D-arabinose 5-phosphate + phosphoenolpyruvate + H2O = 3-deoxy-alpha-D-manno-2-octulosonate-8-phosphate + phosphate. It participates in carbohydrate biosynthesis; 3-deoxy-D-manno-octulosonate biosynthesis; 3-deoxy-D-manno-octulosonate from D-ribulose 5-phosphate: step 2/3. It functions in the pathway bacterial outer membrane biogenesis; lipopolysaccharide biosynthesis. The protein is 2-dehydro-3-deoxyphosphooctonate aldolase of Edwardsiella ictaluri (strain 93-146).